The following is a 281-amino-acid chain: Bifunctional protein FolD (281 aa).

Residues 165–167 and Ser190 contribute to the NADP(+) site; that span reads GRS.

This sequence belongs to the tetrahydrofolate dehydrogenase/cyclohydrolase family. Homodimer.

It carries out the reaction (6R)-5,10-methylene-5,6,7,8-tetrahydrofolate + NADP(+) = (6R)-5,10-methenyltetrahydrofolate + NADPH. The enzyme catalyses (6R)-5,10-methenyltetrahydrofolate + H2O = (6R)-10-formyltetrahydrofolate + H(+). Its pathway is one-carbon metabolism; tetrahydrofolate interconversion. Its function is as follows. Catalyzes the oxidation of 5,10-methylenetetrahydrofolate to 5,10-methenyltetrahydrofolate and then the hydrolysis of 5,10-methenyltetrahydrofolate to 10-formyltetrahydrofolate. This Polaromonas naphthalenivorans (strain CJ2) protein is Bifunctional protein FolD.